Here is a 312-residue protein sequence, read N- to C-terminus: Olfactory receptor 5p57 (312 aa).

Residues 1–25 (MEPGNYTVVTEFILLGLTDDITVSV) are Extracellular-facing. An N-linked (GlcNAc...) asparagine glycan is attached at N5. The chain crosses the membrane as a helical span at residues 26 to 46 (ILFVMFLIVYSVTLMGNLNII). Residues 47–54 (VLIRTSPQ) are Cytoplasmic-facing. A helical transmembrane segment spans residues 55 to 75 (LHTPMYLFLSHLAFLDIGYSS). The Extracellular portion of the chain corresponds to 76–99 (SVTPIMLRGFLRKGTFIPVAGCVA). Residues C97 and C189 are joined by a disulfide bond. The chain crosses the membrane as a helical span at residues 100–120 (QLCIVVAFGTSESFLLASMAY). Over 121 to 133 (DRYVAICSPLLYS) the chain is Cytoplasmic. Residues 134–154 (TQMSSTVCILLVGTSYLGGWV) traverse the membrane as a helical segment. The Extracellular portion of the chain corresponds to 155 to 196 (NAWIFTGCSLNLSFCGPNKINHFFCDYSPLLKLSCSHDFSFE). N165 is a glycosylation site (N-linked (GlcNAc...) asparagine). The helical transmembrane segment at 197–217 (VIPAISSGSIIVVTVFIIALS) threads the bilayer. Over 218–237 (YVYILVSILKMRSTEGRQKA) the chain is Cytoplasmic. The chain crosses the membrane as a helical span at residues 238–258 (FSTCTSHLTAVTLFFGTITFI). Over 259–271 (YVMPQSSYSTDQN) the chain is Extracellular. The helical transmembrane segment at 272 to 292 (KVVSVFYTVVIPMLNPLIYSF) threads the bilayer. Topologically, residues 293 to 312 (RNKEVKEAMKKLIAKTHWWS) are cytoplasmic.

This sequence belongs to the G-protein coupled receptor 1 family.

It localises to the cell membrane. Functionally, probable odorant receptor, which recognizes only aliphatic alcohols, suggesting that it may convey a 'woody' or 'sweet' sour. The polypeptide is Olfactory receptor 5p57 (Mus musculus (Mouse)).